The chain runs to 649 residues: Protein WHI4 (649 aa).

Serine 22 and serine 206 each carry phosphoserine. 2 disordered regions span residues glutamate 196–glutamine 217 and isoleucine 228–proline 247. Residues isoleucine 228–leucine 238 show a composition bias toward polar residues. Phosphoserine occurs at positions 258 and 283. 2 disordered regions span residues leucine 438–asparagine 461 and glutamine 604–serine 649. Residues asparagine 533–asparagine 625 form the RRM domain. A compositionally biased stretch (polar residues) spans glycine 631 to serine 649.

In terms of processing, phosphorylated by PKA in vitro.

The protein resides in the cytoplasm. Its function is as follows. Has a partially redundant function to WHI3, a dosage-dependent modulator of cell size. This Saccharomyces cerevisiae (strain ATCC 204508 / S288c) (Baker's yeast) protein is Protein WHI4 (WHI4).